The following is a 147-amino-acid chain: Ubiquitin-conjugating enzyme E2 D3 (147 aa).

Positions 1-147 (MALKRINKEL…SREWTQKYAM (147 aa)) constitute a UBC core domain. Cys21 and Cys107 are oxidised to a cystine. Cys85 serves as the catalytic Glycyl thioester intermediate.

The protein belongs to the ubiquitin-conjugating enzyme family. In terms of assembly, interacts with SCF (SKP1-CUL1-F-box protein) E3 ubiquitin ligase complex; when Cullin is neddylated, the interaction between the E2 and the SCF complex is strengthened. Interacts with DAPK3. Interacts with BRCA1; the DNA damage checkpoint promotes the association with BRCA1 after ionizing radiation. Interacts non-covalently with ubiquitin. Interacts with E3 ubiquitin-protein ligase CBLC. Interacts with UBTD1. Interacts with RIGI and RNF135; involved in RIGI ubiquitination and activation. In terms of processing, phosphorylated by AURKB.

The protein localises to the cell membrane. The protein resides in the endosome membrane. The catalysed reaction is S-ubiquitinyl-[E1 ubiquitin-activating enzyme]-L-cysteine + [E2 ubiquitin-conjugating enzyme]-L-cysteine = [E1 ubiquitin-activating enzyme]-L-cysteine + S-ubiquitinyl-[E2 ubiquitin-conjugating enzyme]-L-cysteine.. The enzyme catalyses S-ubiquitinyl-[E1 ubiquitin-activating enzyme]-L-cysteine + [acceptor protein]-L-lysine = [E1 ubiquitin-activating enzyme]-L-cysteine + N(6)-monoubiquitinyl-[acceptor protein]-L-lysine.. Its pathway is protein modification; protein ubiquitination. Accepts ubiquitin from the E1 complex and catalyzes its covalent attachment to other proteins. In vitro catalyzes 'Lys-11'-, as well as 'Lys-48'-linked polyubiquitination. Cooperates with the E2 CDC34 and the SCF(FBXW11) E3 ligase complex for the polyubiquitination of NFKBIA leading to its subsequent proteasomal degradation. Acts as an initiator E2, priming the phosphorylated NFKBIA target at positions 'Lys-21' and/or 'Lys-22' with a monoubiquitin. Ubiquitin chain elongation is then performed by CDC34, building ubiquitin chains from the UBE2D3-primed NFKBIA-linked ubiquitin. Also acts as an initiator E2, in conjunction with RNF8, for the priming of PCNA. Monoubiquitination of PCNA, and its subsequent polyubiquitination, are essential events in the operation of the DNA damage tolerance (DDT) pathway that is activated after DNA damage caused by UV or chemical agents during S-phase. Associates with the BRCA1/BARD1 E3 ligase complex to perform ubiquitination at DNA damage sites following ionizing radiation leading to DNA repair. Targets DAPK3 for ubiquitination which influences promyelocytic leukemia protein nuclear body (PML-NB) formation in the nucleus. In conjunction with the MDM2 and TOPORS E3 ligases, functions ubiquitination of p53/TP53. In conjunction with the CBL E3 ligase, targets EGFR for polyubiquitination at the plasma membrane as well as during its internalization and transport on endosomes. In conjunction with the STUB1 E3 quality control E3 ligase, ubiquitinates unfolded proteins to catalyze their immediate destruction. Together with RNF135, catalyzes the viral RNA-dependent 'Lys-63'-linked polyubiquitination of RIGI to activate the downstream signaling pathway that leads to interferon beta production. Together with ZNF598, catalyzes ubiquitination of 40S ribosomal proteins in response to ribosome collisions. In cooperation with the GATOR2 complex, catalyzes 'Lys-6'-linked ubiquitination of NPRL2. This is Ubiquitin-conjugating enzyme E2 D3 (UBE2D3) from Bos taurus (Bovine).